The chain runs to 493 residues: Aspartate-semialdehyde dehydrogenase (Non-phosphorylating) (493 aa).

NADP(+) is bound by residues 160 to 161 (WN), 184 to 187 (KPAH), and 237 to 238 (GS). The active-site Proton acceptor is the glutamate 259. Leucine 260 is an NADP(+) binding site. Cysteine 293 serves as the catalytic Nucleophile. Glutamate 390 lines the NADP(+) pocket.

It belongs to the aldehyde dehydrogenase family.

Its subcellular location is the cytoplasm. It catalyses the reaction L-aspartate 4-semialdehyde + NAD(+) + H2O = L-aspartate + NADH + 2 H(+). Involved in the degradation of ectoine, which allows H.elongata to utilize ectoine as both a carbon and a nitrogen source for growth. Probably catalyzes the NAD(+)-dependent oxidation of L-aspartate-semialdehyde to L-aspartate. This is Aspartate-semialdehyde dehydrogenase (Non-phosphorylating) from Halomonas elongata (strain ATCC 33173 / DSM 2581 / NBRC 15536 / NCIMB 2198 / 1H9).